The following is a 203-amino-acid chain: Proteasome subunit beta 2 (203 aa).

The propeptide at 1-9 is removed in mature form; by autocatalysis; sequence MGEEVQIGA. Residue threonine 10 is the Nucleophile of the active site.

Belongs to the peptidase T1B family. As to quaternary structure, the 20S proteasome core is composed of 14 alpha and 14 beta subunits that assemble into four stacked heptameric rings, resulting in a barrel-shaped structure. The two inner rings, each composed of seven catalytic beta subunits, are sandwiched by two outer rings, each composed of seven alpha subunits. The catalytic chamber with the active sites is on the inside of the barrel. Has a gated structure, the ends of the cylinder being occluded by the N-termini of the alpha-subunits. Is capped at one or both ends by the proteasome regulatory ATPase, PAN.

Its subcellular location is the cytoplasm. The catalysed reaction is Cleavage of peptide bonds with very broad specificity.. The formation of the proteasomal ATPase PAN-20S proteasome complex, via the docking of the C-termini of PAN into the intersubunit pockets in the alpha-rings, triggers opening of the gate for substrate entry. Interconversion between the open-gate and close-gate conformations leads to a dynamic regulation of the 20S proteasome proteolysis activity. Functionally, component of the proteasome core, a large protease complex with broad specificity involved in protein degradation. The chain is Proteasome subunit beta 2 from Pyrobaculum arsenaticum (strain DSM 13514 / JCM 11321 / PZ6).